The following is a 1007-amino-acid chain: Inversin-A (1007 aa).

ANK repeat units follow at residues 9 to 39 (SLASPVQAAAVTGDKTTLLKLIASSPEVIDQ), 43 to 72 (LGRTPLMYSVLGDRRSCAEALLKHGAQVNH), 76 to 105 (SGRTALHLAAQTGNHRLLKLLLSRKADCTH), 109 to 140 (RDITAVHLSTRHQDTRCLALILKYTPPGQVDA), 144 to 173 (RKQTALHWSAYYNRPRHVRLLVRHGSNIGI), 177 to 209 (EGKIPLHWAAGHKDPEAALTVRCLLEAAPTESL), 216 to 246 (EGRTPLHLAVGDGNQEVVRLLTSYRGCNVAP), 250 to 279 (LFRTPLHWAALLGYTPIAHLLLETNNSPNI), 284 to 313 (QGATPLHYAAQGNCPDTVRVLLSHISVRDE), 317 to 346 (EGRTAFMWAAGKGSDEVVRTMLELDPELEV), 352 to 381 (YGGTALHAASLSGQITTVRILLENRVQVDA), 385 to 414 (MKHTALFRACEMGHREVISTLIKGGAKVHL), 418 to 447 (DGRSPLHWAALGGNANVCQILIENNINPDA), 451 to 480 (EGRTPLQCAAYGGYIGCMEVLMENKADPNI), 484 to 513 (NGRTALHWSCNNGYLDAVKLLLGYSAFPNQ), and 519 to 549 (ERYTPLDYALLGGHQEVIQFMLEHGALSIAA). A D-box 1 motif is present at residues 486 to 494 (RTALHWSCN). Residues 551–580 (QDIAASKIQAVYKGHKVRRAFQERKNLLMK) form the IQ 1 domain. Composition is skewed to basic and acidic residues over residues 585–599 (RKGAAAKKREGENRQ) and 608–652 (GKQK…HQEE). Disordered regions lie at residues 585 to 837 (RKGA…KEFS) and 868 to 893 (SAKSGQRPLTETQSPEKACQGSSALK). A compositionally biased stretch (polar residues) spans 684–701 (IQSSPIEHVHTNSIQTRM). Over residues 702–712 (SPSRTSISHSS) the composition is skewed to low complexity. A compositionally biased stretch (polar residues) spans 727–745 (NPTQNNTQPRRTSRPQIES). Basic and acidic residues predominate over residues 751–771 (HRIEDLVQKESRRKSHREERK). The segment covering 772-784 (GSHRQRASSHHRL) has biased composition (basic residues). Residues 870-893 (KSGQRPLTETQSPEKACQGSSALK) are compositionally biased toward polar residues. Positions 964–972 (RKQLFQRKK) match the D-box 2 motif. One can recognise an IQ 2 domain in the interval 971–1000 (KKHAATVIQKAWRTYCIRKSSRKTRHSHLR).

Interacts with apc2. Binds calmodulin.

The protein resides in the cytoplasm. It is found in the cytoskeleton. In terms of biological role, required for normal renal development and establishment of left-right axis. Probably acts as a molecular switch between different Wnt signaling pathways. Inhibits the canonical Wnt pathway by targeting cytoplasmic disheveled for degradation by the ubiquitin-proteasome. This suggests that it is required in renal development to oppose the repression of terminal differentiation of tubular epithelial cells by Wnt signaling. Plays a central role in convergent extension movements in gastrulating embryos, a processus regulated by Wnt signaling. The chain is Inversin-A (invs-a) from Xenopus laevis (African clawed frog).